The chain runs to 333 residues: Phenylalanine--tRNA ligase alpha subunit (333 aa).

Glutamate 254 is a Mg(2+) binding site.

This sequence belongs to the class-II aminoacyl-tRNA synthetase family. Phe-tRNA synthetase alpha subunit type 1 subfamily. As to quaternary structure, tetramer of two alpha and two beta subunits. Mg(2+) serves as cofactor.

It is found in the cytoplasm. The enzyme catalyses tRNA(Phe) + L-phenylalanine + ATP = L-phenylalanyl-tRNA(Phe) + AMP + diphosphate + H(+). This Xylella fastidiosa (strain 9a5c) protein is Phenylalanine--tRNA ligase alpha subunit (pheS).